A 1166-amino-acid polypeptide reads, in one-letter code: DNA-directed RNA polymerase I subunit RPA2 (1166 aa).

The segment at 1081–1130 adopts a C4-type zinc-finger fold; sequence CQNCGSILSCYVNRAIMKTQTFIPPSLDESNKDTEDKEIHMNEKVICKVC.

This sequence belongs to the RNA polymerase beta chain family. As to quaternary structure, component of the RNA polymerase I (Pol I) complex consisting of at least 13 subunits.

The protein localises to the nucleus. It localises to the nucleolus. It catalyses the reaction RNA(n) + a ribonucleoside 5'-triphosphate = RNA(n+1) + diphosphate. DNA-dependent RNA polymerase catalyzes the transcription of DNA into RNA using the four ribonucleoside triphosphates as substrates. Second largest core component of RNA polymerase I which synthesizes ribosomal RNA precursors. Proposed to contribute to the polymerase catalytic activity and forms the polymerase active center together with the largest subunit. Pol I is composed of mobile elements and RPA2 is part of the core element with the central large cleft and probably a clamp element that moves to open and close the cleft. This chain is DNA-directed RNA polymerase I subunit RPA2 (RPA2), found in Euplotoides octocarinatus (Freshwater ciliate).